Reading from the N-terminus, the 113-residue chain is MIKLKVKKGDEVVIITGKYKGKKGKVLKVFPEENTVVVSGVNLVKKHTKPNKMSEGGIITQESPIHISNIAHIDPKTGNPTKVAFKFLEDGSKVRVAKKSGEIIGKVGNNVKV.

Belongs to the universal ribosomal protein uL24 family. In terms of assembly, part of the 50S ribosomal subunit.

In terms of biological role, one of two assembly initiator proteins, it binds directly to the 5'-end of the 23S rRNA, where it nucleates assembly of the 50S subunit. Functionally, one of the proteins that surrounds the polypeptide exit tunnel on the outside of the subunit. The protein is Large ribosomal subunit protein uL24 of Rickettsia prowazekii (strain Madrid E).